Consider the following 903-residue polypeptide: Protein translocase subunit SecA (903 aa).

ATP-binding positions include Gln87, 105–109 (GEGKT), and Asp507. Disordered stretches follow at residues 565–584 (ESRR…GDPG) and 855–877 (AEPG…LASQ). Positions 887, 889, 898, and 899 each coordinate Zn(2+).

This sequence belongs to the SecA family. Monomer and homodimer. Part of the essential Sec protein translocation apparatus which comprises SecA, SecYEG and auxiliary proteins SecDF-YajC and YidC. It depends on Zn(2+) as a cofactor.

The protein localises to the cell inner membrane. It is found in the cytoplasm. The enzyme catalyses ATP + H2O + cellular proteinSide 1 = ADP + phosphate + cellular proteinSide 2.. Its function is as follows. Part of the Sec protein translocase complex. Interacts with the SecYEG preprotein conducting channel. Has a central role in coupling the hydrolysis of ATP to the transfer of proteins into and across the cell membrane, serving both as a receptor for the preprotein-SecB complex and as an ATP-driven molecular motor driving the stepwise translocation of polypeptide chains across the membrane. The polypeptide is Protein translocase subunit SecA (Chromobacterium violaceum (strain ATCC 12472 / DSM 30191 / JCM 1249 / CCUG 213 / NBRC 12614 / NCIMB 9131 / NCTC 9757 / MK)).